A 186-amino-acid chain; its full sequence is MSTLADTIHIENVVASSDLGQELALDQLSTDLPGAEYNPEDFPGVVYRLQEPKSATLIFRSGKVVCTGAKSVDDVHEALGIVFGDIRELGIDVTSNPPIEVQNIVSSASLEQSLNLNAIAIGLGLEQIEYEPEQFPGLVYRLDDPDVVVLLFGSGKLVITGGQNPDEAEQALAHVQDRLTELGLLD.

2 repeat units span residues 10-86 and 101-179.

Belongs to the TBP family.

Functionally, general factor that plays a role in the activation of archaeal genes transcribed by RNA polymerase. Binds specifically to the TATA box promoter element which lies close to the position of transcription initiation. The sequence is that of TATA-box-binding protein B (tbpB1) from Halobacterium salinarum (strain ATCC 700922 / JCM 11081 / NRC-1) (Halobacterium halobium).